The chain runs to 97 residues: Aspartyl/glutamyl-tRNA(Asn/Gln) amidotransferase subunit C (97 aa).

It belongs to the GatC family. Heterotrimer of A, B and C subunits.

It catalyses the reaction L-glutamyl-tRNA(Gln) + L-glutamine + ATP + H2O = L-glutaminyl-tRNA(Gln) + L-glutamate + ADP + phosphate + H(+). The catalysed reaction is L-aspartyl-tRNA(Asn) + L-glutamine + ATP + H2O = L-asparaginyl-tRNA(Asn) + L-glutamate + ADP + phosphate + 2 H(+). Allows the formation of correctly charged Asn-tRNA(Asn) or Gln-tRNA(Gln) through the transamidation of misacylated Asp-tRNA(Asn) or Glu-tRNA(Gln) in organisms which lack either or both of asparaginyl-tRNA or glutaminyl-tRNA synthetases. The reaction takes place in the presence of glutamine and ATP through an activated phospho-Asp-tRNA(Asn) or phospho-Glu-tRNA(Gln). The chain is Aspartyl/glutamyl-tRNA(Asn/Gln) amidotransferase subunit C from Prochlorococcus marinus subsp. pastoris (strain CCMP1986 / NIES-2087 / MED4).